The primary structure comprises 356 residues: Phosphoribosylformylglycinamidine cyclo-ligase (356 aa).

Belongs to the AIR synthase family.

It localises to the cytoplasm. The enzyme catalyses 2-formamido-N(1)-(5-O-phospho-beta-D-ribosyl)acetamidine + ATP = 5-amino-1-(5-phospho-beta-D-ribosyl)imidazole + ADP + phosphate + H(+). It participates in purine metabolism; IMP biosynthesis via de novo pathway; 5-amino-1-(5-phospho-D-ribosyl)imidazole from N(2)-formyl-N(1)-(5-phospho-D-ribosyl)glycinamide: step 2/2. The protein is Phosphoribosylformylglycinamidine cyclo-ligase of Rhizobium meliloti (strain 1021) (Ensifer meliloti).